We begin with the raw amino-acid sequence, 970 residues long: MSTVSGLKRPQSSEKNHRDRVFVRATRGKVQKVVREQYLRNDIPCQSRACPLCRSKLPKDSRGNVLEPILSEKPMFLEKFGHHYLIPDSNIFYHCIDALEHPNNFFDVIILQTVFSEISSKSIPLYNRMKRLCQEKTKRFTPFSNEFFVDTFVERLDDESANDRNDRAIRNAASWFASHLASLGIKIVLLTDDRENARLAAEQGIQVSTLKDYVQYLPDSEILLDMVSAIADAIASKEQVESGTKNVYELHWSMSRLLACIKNGEVHKGLINISTYNYLEGSVVVPGYNKPVLVSGRENLNRAVQGDIVCIQILPQDQWKTEAEEIADDDEDVVVSTAAEPDSARINDLELITKRNAHPTAKVVGILKRNWRPYVGHVDNATIAQSKGGSQQTVLLTPMDRRVPKIRFRTRQAPRLVGRRIVVAIDLWDASSRYPEGHFVRDLGEMETKEAETEALLLEYDVQHRPFPKAVLDCLPEEGHNWKVPADKTHPLWKNRKDFRDKLICSIDPPGCQDIDDALHACVLPNGNYEVGVHIADVTHFVKPNTSMDSEAASRGTTVYLVDKRIDMLPMLLGTDLCSLRPYVERFAFSCIWEMDENANIIKVHFTKSVIASKEAFSYADAQARIDDQKMQDPLTQGMRVLLKLSKILKQKRMDEGALNLASPEVRIQTDNETSDPMDVEIKQLLETNSLVEEFMLLANISVAQKIYDAFPQTAVLRRHAAPPLTNFDSLQDILRVCKGMHLKCDTSKSLAKSLDECVDPKEPYFNTLLRILTTRCMLSAEYFCSGTFAPPDFRHYGLASPIYTHFTSPIRRYADVLAHRQLAAAIDYETINPSLSDKSRLIEICNGINYRHRMAQMAGRASIEYYVGQALKGGVAEEDAYVIKVFKNGFVVFIARFGLEGIVYTKSLSSVLEPNVEYVEDEYKLNIEIRDQPKPQTVQIQMFQQVRVRVTTVRDEHSGKQKVQITLVY.

A not essential for function region spans residues 1-74 (MSTVSGLKRP…VLEPILSEKP (74 aa)). The PINc domain maps to 83–198 (HYLIPDSNIF…LLTDDRENAR (116 aa)). One can recognise a CSD1 domain in the interval 251–334 (HWSMSRLLAC…EIADDDEDVV (84 aa)). In terms of domain architecture, CSD2 spans 394 to 461 (VLLTPMDRRV…ETEALLLEYD (68 aa)). An RNB domain is found at 496–827 (RKDFRDKLIC…LAHRQLAAAI (332 aa)). Residues 823-970 (LAAAIDYETI…KQKVQITLVY (148 aa)) are essential for function. An S1 motif domain is found at 869 to 969 (GQALKGGVAE…GKQKVQITLV (101 aa)).

The protein belongs to the RNR ribonuclease family. As to quaternary structure, component of the RNA exosome complex. Specifically part of the catalytically inactive RNA exosome core complex (Exo-9) which may associate with the catalytic subunits rrp6 and dis3 in cytoplasmic- and nuclear-specific RNA exosome complex forms. Exo-9 is formed by a hexameric base ring of RNase PH domain-containing subunits and a cap ring consisting of csl4, rrp4 and rrp40; dis3 associates with the base ring of Exo-9. Oligomer of dis3, pim1 and spi1. Interacts with ned1. Mg(2+) serves as cofactor.

Its subcellular location is the cytoplasm. It localises to the nucleus. Functionally, catalytic component of the RNA exosome complex which has 3'-&gt;5' exoribonuclease activity and participates in a multitude of cellular RNA processing and degradation events. In the nucleus, the RNA exosome complex is involved in proper maturation of stable RNA species such as rRNA, snRNA and snoRNA, in the elimination of RNA processing by-products and non-coding 'pervasive' transcripts, such as antisense RNA species and cryptic unstable transcripts (CUTs), and of mRNAs with processing defects, thereby limiting or excluding their export to the cytoplasm. In the cytoplasm, the RNA exosome complex is involved in general mRNA turnover and in RNA surveillance pathways, preventing translation of aberrant mRNAs. The catalytic inactive RNA exosome core complex of 9 subunits (Exo-9) is proposed to play a pivotal role in the binding and presentation of RNA for ribonucleolysis, and to serve as a scaffold for the association with catalytic subunits and accessory proteins or complexes. DIS3 has both 3'-5' exonuclease and endonuclease activities. The exonuclease activity of DIS3 is down-regulated upon association with Exo-9 possibly involving a conformational change in the catalytic domain and threading of the RNA substrate through the complex central channel. Structured substrates can be degraded if they have a 3' single-stranded extension sufficiently long (such as 35 nt poly(A)) to span the proposed complex inner RNA-binding path and to reach the exonuclease site provided by dis3. Implicated in mitotic control. Essential for cell division and spore germination. May be involved in regulating protein dephosphorylation during mitosis. The polypeptide is Exosome complex exonuclease dis3 (dis3) (Schizosaccharomyces pombe (strain 972 / ATCC 24843) (Fission yeast)).